Reading from the N-terminus, the 211-residue chain is Bacteriorhodopsin (211 aa).

The helical transmembrane segment at 1–19 (IWLWLGTAGMFLGMLYFIA) threads the bilayer. Residues 20-33 (RGWGETDSRRQKFY) lie on the Cytoplasmic side of the membrane. The chain crosses the membrane as a helical span at residues 34–52 (IATILITAIAFVNYLAMAL). Topologically, residues 53–68 (GFGLTIVEFAGEEHPI) are extracellular. Residues 69–86 (YWARYSDWLFTTPLLLYD) traverse the membrane as a helical segment. At 87 to 97 (LGLLAGADRNT) the chain is on the cytoplasmic side. Residues 98 to 117 (ITSLVSLDVLMIGTGLVATL) traverse the membrane as a helical segment. Over 118 to 130 (SAGSGVLSAGAER) the chain is Extracellular. A helical transmembrane segment spans residues 131 to 150 (LVWWGISTAFLLVLLYFLFS). Residues 151-168 (SLSGRVADLPSDTRSTFK) lie on the Cytoplasmic side of the membrane. The chain crosses the membrane as a helical span at residues 169 to 187 (TLRNLVTVVWLVYPVWWLI). The Extracellular segment spans residues 188–199 (GTEGIGLVGIGI). A helical membrane pass occupies residues 200–211 (ETAGFMVIDLTA).

The protein belongs to the archaeal/bacterial/fungal opsin family.

It localises to the cell membrane. Functionally, light-driven proton pump. The sequence is that of Bacteriorhodopsin (bop) from Halobacterium halobium (strain port).